The primary structure comprises 361 residues: Peptide chain release factor 1 (361 aa).

Glutamine 235 bears the N5-methylglutamine mark.

The protein belongs to the prokaryotic/mitochondrial release factor family. In terms of processing, methylated by PrmC. Methylation increases the termination efficiency of RF1.

The protein localises to the cytoplasm. Functionally, peptide chain release factor 1 directs the termination of translation in response to the peptide chain termination codons UAG and UAA. In Xanthomonas euvesicatoria pv. vesicatoria (strain 85-10) (Xanthomonas campestris pv. vesicatoria), this protein is Peptide chain release factor 1.